Here is a 568-residue protein sequence, read N- to C-terminus: TWiK family of potassium channels protein 9 (568 aa).

Over 1-15 the chain is Cytoplasmic; it reads MKCSFHIPEKYQWAS. A helical membrane pass occupies residues 16–36; the sequence is TLFVHVALIAGVAVYTVFGAL. The segment at residues 163–183 is an intramembrane region (pore-forming); sequence IGNSVIFAFTVITTIGYGHVA. Residues 191–211 traverse the membrane as a helical segment; the sequence is LFLIFYGVIGVPFTLLTIADL. The Cytoplasmic segment spans residues 212–316; the sequence is GMFLTRFLKN…NNEPRKTEES (105 aa). 2 disordered regions span residues 243–262 and 274–314; these read QRNK…RSEV and MRTA…RKTE. Over residues 297–307 the composition is skewed to acidic residues; the sequence is GKEEDEEEPEN. A helical membrane pass occupies residues 317-337; that stretch reads IALGITFTCYLVAGAKILSVY. Residues 343 to 363 constitute an intramembrane region (pore-forming); it reads FFKALYFNFVTLTTIGLGDFV. A helical transmembrane segment spans residues 370 to 390; sequence LLITLIYIGIGLALTTMAIEI. The Cytoplasmic portion of the chain corresponds to 391–568; it reads AADLLKKLHY…LRTYTNARRK (178 aa).

The protein belongs to the two pore domain potassium channel (TC 1.A.1.8) family. Expressed in ray A-type neurons and cell bodies. Also seen in head, pharyngeal and phasmid neurons, and in coelomocytes.

The protein resides in the membrane. Potassium channel protein that may be component of regulatory network that controls ray development and function. The polypeptide is TWiK family of potassium channels protein 9 (twk-9) (Caenorhabditis elegans).